Consider the following 105-residue polypeptide: Large ribosomal subunit protein bL21 (105 aa).

The protein belongs to the bacterial ribosomal protein bL21 family. In terms of assembly, part of the 50S ribosomal subunit. Contacts protein L20.

In terms of biological role, this protein binds to 23S rRNA in the presence of protein L20. The sequence is that of Large ribosomal subunit protein bL21 from Natranaerobius thermophilus (strain ATCC BAA-1301 / DSM 18059 / JW/NM-WN-LF).